The primary structure comprises 151 residues: Allatostatin-A (151 aa).

An N-terminal signal peptide occupies residues 1 to 21 (MNSLHAHLLLLAVCCVGYIAS). Positions 22-54 (SPVIGQDQRSGDSDADVLLAADEMADNGGDNID) are excised as a propeptide. 3 positions are modified to leucine amide: Leu64, Leu88, and Leu99. Residues 103–135 (SDYDYDQDNEIDYRVPPANYLAAERAVRPGRQN) constitute a propeptide that is removed on maturation. The interval 131–151 (PGRQNKRTTRPQPFNFGLGRR) is disordered. Leucine amide is present on Leu148.

This sequence belongs to the allatostatin family.

The protein resides in the secreted. May act as a neurotransmitter or neuromodulator. The chain is Allatostatin-A (AstA) from Drosophila melanogaster (Fruit fly).